The following is a 250-amino-acid chain: NADH-quinone oxidoreductase subunit C (250 aa).

The protein belongs to the complex I 30 kDa subunit family. In terms of assembly, NDH-1 is composed of 14 different subunits. Subunits NuoB, C, D, E, F, and G constitute the peripheral sector of the complex.

The protein localises to the cell inner membrane. It carries out the reaction a quinone + NADH + 5 H(+)(in) = a quinol + NAD(+) + 4 H(+)(out). In terms of biological role, NDH-1 shuttles electrons from NADH, via FMN and iron-sulfur (Fe-S) centers, to quinones in the respiratory chain. The immediate electron acceptor for the enzyme in this species is believed to be ubiquinone. Couples the redox reaction to proton translocation (for every two electrons transferred, four hydrogen ions are translocated across the cytoplasmic membrane), and thus conserves the redox energy in a proton gradient. The polypeptide is NADH-quinone oxidoreductase subunit C (Xylella fastidiosa (strain 9a5c)).